The chain runs to 553 residues: MSDIALTVSILALVAVVGLFIGNVKFRGIGLGIGGVLFGGIIVGHFVSQAGMTLSSDMLHVIQEFGLILFVYTIGIQVGPGFFASLRVSGLRLNLFAVLIVIIGGLVTAILHKLFDIPLPVVLGIFSGAVTNTPALGAGQQILRDLGTPMEMVDQMGMSYAMAYPFGICGILFTMWMLRVIFRVNVETEAQQHESSRTNGGALIKTINIRVENPNLHDLAIKDVPILNGDKIICSRLKREETLKVPSPDTIIQLGDLLHLVGQPADLHNAQLVIGQEVDTSLSTKGTDLRVERVVVTNENVLGKRIRDLHFKERYDVVISRLNRAGVELVASGDISLQFGDILNLVGRPSAIDAVANVLGNAQQKLQQVQMLPVFIGIGLGVLLGSIPVFVPGFPAALKLGLAGGPLIMALILGRIGSIGKLYWFMPPSANLALRELGIVLFLSVVGLKSGGDFVNTLVNGEGLSWIGYGALITAVPLITVGILARMLAKMNYLTMCGMLAGSMTDPPALAFANNLHPTSGAPALSYATVYPLVMFLRIITPQLLAVLFWSIG.

The next 5 helical transmembrane spans lie at isoleucine 4–valine 24, glycine 28–serine 48, phenylalanine 65–serine 85, leucine 95–phenylalanine 115, and methionine 158–leucine 178. RCK C-terminal domains follow at residues glutamine 191–glutamine 276 and aspartate 279–asparagine 361. Transmembrane regions (helical) follow at residues methionine 371–valine 391, glycine 393–leucine 413, isoleucine 439–valine 459, leucine 464–leucine 484, tyrosine 493–alanine 513, and leucine 533–glycine 553.

Belongs to the AAE transporter (TC 2.A.81) family. YidE subfamily.

It localises to the cell membrane. This Shigella boydii serotype 4 (strain Sb227) protein is Putative transport protein YidE.